The primary structure comprises 470 residues: Light-independent protochlorophyllide reductase subunit N (470 aa).

The [4Fe-4S] cluster site is built by Cys-23, Cys-48, and Cys-108.

This sequence belongs to the BchN/ChlN family. As to quaternary structure, protochlorophyllide reductase is composed of three subunits; ChlL, ChlN and ChlB. Forms a heterotetramer of two ChlB and two ChlN subunits. Requires [4Fe-4S] cluster as cofactor.

It is found in the plastid. Its subcellular location is the chloroplast. It carries out the reaction chlorophyllide a + oxidized 2[4Fe-4S]-[ferredoxin] + 2 ADP + 2 phosphate = protochlorophyllide a + reduced 2[4Fe-4S]-[ferredoxin] + 2 ATP + 2 H2O. The protein operates within porphyrin-containing compound metabolism; chlorophyll biosynthesis (light-independent). Component of the dark-operative protochlorophyllide reductase (DPOR) that uses Mg-ATP and reduced ferredoxin to reduce ring D of protochlorophyllide (Pchlide) to form chlorophyllide a (Chlide). This reaction is light-independent. The NB-protein (ChlN-ChlB) is the catalytic component of the complex. This Zygnema circumcarinatum (Green alga) protein is Light-independent protochlorophyllide reductase subunit N.